The following is a 287-amino-acid chain: Nucleotide-binding protein HD_0584 (287 aa).

Residue 8–15 participates in ATP binding; it reads GRSGSGKS. Position 56–59 (56–59) interacts with GTP; that stretch reads DIRN.

The protein belongs to the RapZ-like family.

Its function is as follows. Displays ATPase and GTPase activities. The polypeptide is Nucleotide-binding protein HD_0584 (Haemophilus ducreyi (strain 35000HP / ATCC 700724)).